We begin with the raw amino-acid sequence, 346 residues long: Uroporphyrinogen decarboxylase (346 aa).

Substrate contacts are provided by residues 23–27, Asp-72, Tyr-155, Ser-209, and His-322; that span reads RQAGR.

Belongs to the uroporphyrinogen decarboxylase family. Homodimer.

The protein resides in the cytoplasm. It catalyses the reaction uroporphyrinogen III + 4 H(+) = coproporphyrinogen III + 4 CO2. The protein operates within porphyrin-containing compound metabolism; protoporphyrin-IX biosynthesis; coproporphyrinogen-III from 5-aminolevulinate: step 4/4. Functionally, catalyzes the decarboxylation of four acetate groups of uroporphyrinogen-III to yield coproporphyrinogen-III. The sequence is that of Uroporphyrinogen decarboxylase from Anaeromyxobacter dehalogenans (strain 2CP-C).